A 193-amino-acid chain; its full sequence is Xanthine phosphoribosyltransferase (193 aa).

2 residues coordinate xanthine: L20 and N27. 129 to 133 (ANGKA) is a 5-phospho-alpha-D-ribose 1-diphosphate binding site. Residue K157 participates in xanthine binding.

The protein belongs to the purine/pyrimidine phosphoribosyltransferase family. Xpt subfamily. As to quaternary structure, homodimer.

Its subcellular location is the cytoplasm. It catalyses the reaction XMP + diphosphate = xanthine + 5-phospho-alpha-D-ribose 1-diphosphate. It participates in purine metabolism; XMP biosynthesis via salvage pathway; XMP from xanthine: step 1/1. Its function is as follows. Converts the preformed base xanthine, a product of nucleic acid breakdown, to xanthosine 5'-monophosphate (XMP), so it can be reused for RNA or DNA synthesis. This Bifidobacterium longum subsp. infantis (strain ATCC 15697 / DSM 20088 / JCM 1222 / NCTC 11817 / S12) protein is Xanthine phosphoribosyltransferase.